We begin with the raw amino-acid sequence, 220 residues long: Inner membrane protein YqjA (220 aa).

Residues 1 to 27 (MELLTQLLQALWAQDFETLANPSMIGM) lie on the Periplasmic side of the membrane. Residues 28–48 (LYFVLFVILFLENGLLPAAFL) traverse the membrane as a helical segment. At 49 to 52 (PGDS) the chain is on the cytoplasmic side. 2 helical membrane-spanning segments follow: residues 53–73 (LLVL…QTIL) and 74–94 (LLTV…RWLG). At 95–154 (NTRTVQNWLSHLPAHYHQRAHHLFHKHGLSALLIGRFIAFVRTLLPTIAGLSGLNNARFQ) the chain is on the cytoplasmic side. The chain crosses the membrane as a helical span at residues 155-175 (FFNWMSGLLWVLILTTLGYML). The Periplasmic segment spans residues 176-191 (GKTPVFLKYEDQLMSC). A helical membrane pass occupies residues 192–212 (LMLLPVVLLVFGLAGSLVVLW). The Cytoplasmic segment spans residues 213 to 220 (KKKYGNRG).

It belongs to the DedA family.

It is found in the cell inner membrane. Its function is as follows. May be a membrane transporter required for proton motive force (PMF)-dependent drug efflux. Required, with YghB, for the proper export of certain periplasmic amidases and, possibly, other Tat substrates. May play a role in determining membrane lipid composition. The protein is Inner membrane protein YqjA (yqjA) of Escherichia coli (strain K12).